Reading from the N-terminus, the 488-residue chain is Cysteine desulfurase, mitochondrial (488 aa).

A disordered region spans residues 25 to 52 (LPKPLATSSSPATNAPNKTSNPKTGELH). Polar residues predominate over residues 30–47 (ATSSSPATNAPNKTSNPK). Pyridoxal 5'-phosphate-binding positions include 157–158 (AT), Asn237, Gln265, and 285–287 (SSH). Lys288 is subject to N6-(pyridoxal phosphate)lysine. Residue Thr325 participates in pyridoxal 5'-phosphate binding. The active-site Cysteine persulfide intermediate is Cys412. A [2Fe-2S] cluster-binding site is contributed by Cys412.

Belongs to the class-V pyridoxal-phosphate-dependent aminotransferase family. NifS/IscS subfamily. It depends on pyridoxal 5'-phosphate as a cofactor.

The protein resides in the mitochondrion. It catalyses the reaction (sulfur carrier)-H + L-cysteine = (sulfur carrier)-SH + L-alanine. In terms of biological role, catalyzes the removal of elemental sulfur from cysteine to produce alanine. It supplies the inorganic sulfur for iron-sulfur (Fe-S) clusters. Plays a role in both tRNA-processing and mitochondrial metabolism. Involved in the 2-thio-modification of both 5-carboxymethylaminomethyl-2-thiouridine in mitochondrial tRNAs and 5-methoxycarbonylmethyl-2-thiouridine (mcm5s2U) in cytoplasmic tRNAs. The protein is Cysteine desulfurase, mitochondrial (NFS1) of Candida albicans (strain SC5314 / ATCC MYA-2876) (Yeast).